We begin with the raw amino-acid sequence, 585 residues long: Conglutin alpha 3 (585 aa).

Positions 1-23 (MANPFLLSLSLCLVLLYTSACLG) are cleaved as a signal peptide. 2 disulfide bridges follow: Cys-32–Cys-65 and Cys-108–Cys-406. The Cupin type-1 1 domain occupies 37-258 (LNALEPDNRI…ALNIDEDTVH (222 aa)). Disordered stretches follow at residues 113–147 (EEAQQSQSRQERRRGQRSQSQEQEDSHQKIRHFRE), 199–240 (EEYP…ILSG), and 283–402 (KWQE…NGLE). Basic and acidic residues predominate over residues 136 to 147 (EDSHQKIRHFRE). The segment covering 211 to 224 (RQQHQRPSGRRHGQ) has biased composition (basic residues). The span at 309–320 (REEEEKEEEDEP) shows a compositional bias: acidic residues. The span at 338-350 (ERGRGRGGSEWKR) shows a compositional bias: basic and acidic residues. A Cupin type-1 2 domain is found at 412 to 558 (ENIADPTRAD…AFRLSLNQVS (147 aa)). The span at 565 to 579 (NHNPLVTPQSQSQDH) shows a compositional bias: polar residues. Residues 565–585 (NHNPLVTPQSQSQDHNLVKVA) are disordered.

Belongs to the 11S seed storage protein (globulins) family. Hexamer; each subunit is composed of an acidic and a basic chain derived from a single precursor and linked by a disulfide bond. Component of globulins complexes which accumulate in seeds.

Functionally, sulfur-rich seed storage protein. This protein found in the seeds of many leguminous and non-leguminous plants is the source of sulfur-containing amino acids in seed meals. This Lupinus angustifolius (Narrow-leaved blue lupine) protein is Conglutin alpha 3.